The primary structure comprises 110 residues: MALWMRFLPLLALLVLWEPKPAQAFVKQHLCGPHLVEALYLVCGERGFFYTPKSRREVEDPQVPQLELGGGPEAGDLQTLALEVARQKRGIVDQCCTSICSLYQLENYCN.

The N-terminal stretch at 1-24 (MALWMRFLPLLALLVLWEPKPAQA) is a signal peptide. 3 disulfides stabilise this stretch: C31/C96, C43/C109, and C95/C100. Residues 57–87 (EVEDPQVPQLELGGGPEAGDLQTLALEVARQ) constitute a propeptide, c peptide.

This sequence belongs to the insulin family. In terms of assembly, heterodimer of a B chain and an A chain linked by two disulfide bonds.

Its subcellular location is the secreted. Its function is as follows. Insulin decreases blood glucose concentration. It increases cell permeability to monosaccharides, amino acids and fatty acids. It accelerates glycolysis, the pentose phosphate cycle, and glycogen synthesis in liver. This chain is Insulin-1 (Ins1), found in Rattus norvegicus (Rat).